The chain runs to 448 residues: Methylenetetrahydrofolate--tRNA-(uracil-5-)-methyltransferase TrmFO (448 aa).

10–15 (GAGLAG) serves as a coordination point for FAD.

Belongs to the MnmG family. TrmFO subfamily. It depends on FAD as a cofactor.

Its subcellular location is the cytoplasm. The enzyme catalyses uridine(54) in tRNA + (6R)-5,10-methylene-5,6,7,8-tetrahydrofolate + NADH + H(+) = 5-methyluridine(54) in tRNA + (6S)-5,6,7,8-tetrahydrofolate + NAD(+). The catalysed reaction is uridine(54) in tRNA + (6R)-5,10-methylene-5,6,7,8-tetrahydrofolate + NADPH + H(+) = 5-methyluridine(54) in tRNA + (6S)-5,6,7,8-tetrahydrofolate + NADP(+). In terms of biological role, catalyzes the folate-dependent formation of 5-methyl-uridine at position 54 (M-5-U54) in all tRNAs. This is Methylenetetrahydrofolate--tRNA-(uracil-5-)-methyltransferase TrmFO from Lactococcus lactis subsp. cremoris (strain MG1363).